The chain runs to 252 residues: Protein AGAMOUS-LIKE 6 (252 aa).

The 61-residue stretch at Met-1–Gly-61 folds into the MADS-box domain. Short sequence motifs (nuclear localization signal) lie at residues Leu-8–Ile-15 and Gln-138–Met-145. One can recognise a K-box domain in the interval Thr-85–Ser-175.

As to expression, restricted to flowers.

Its subcellular location is the nucleus. In terms of biological role, probable transcription factor involved in fruit development. Key regulator of the transition between the state of 'ovary arrest' imposed towards anthesis and the fertilization-triggered fruit set. The chain is Protein AGAMOUS-LIKE 6 from Solanum lycopersicum (Tomato).